Here is a 177-residue protein sequence, read N- to C-terminus: Large ribosomal subunit protein bL19 (177 aa).

It belongs to the bacterial ribosomal protein bL19 family.

This protein is located at the 30S-50S ribosomal subunit interface and may play a role in the structure and function of the aminoacyl-tRNA binding site. The chain is Large ribosomal subunit protein bL19 from Rhizobium meliloti (strain 1021) (Ensifer meliloti).